A 318-amino-acid chain; its full sequence is Transaldolase (318 aa).

Lys-126 (schiff-base intermediate with substrate) is an active-site residue.

It belongs to the transaldolase family. Type 1 subfamily. Homodimer.

The protein localises to the cytoplasm. It catalyses the reaction D-sedoheptulose 7-phosphate + D-glyceraldehyde 3-phosphate = D-erythrose 4-phosphate + beta-D-fructose 6-phosphate. It participates in carbohydrate degradation; pentose phosphate pathway; D-glyceraldehyde 3-phosphate and beta-D-fructose 6-phosphate from D-ribose 5-phosphate and D-xylulose 5-phosphate (non-oxidative stage): step 2/3. Its function is as follows. Transaldolase is important for the balance of metabolites in the pentose-phosphate pathway. This Cupriavidus necator (strain ATCC 17699 / DSM 428 / KCTC 22496 / NCIMB 10442 / H16 / Stanier 337) (Ralstonia eutropha) protein is Transaldolase.